The chain runs to 138 residues: Transcription antitermination protein NusB (138 aa).

It belongs to the NusB family.

In terms of biological role, involved in transcription antitermination. Required for transcription of ribosomal RNA (rRNA) genes. Binds specifically to the boxA antiterminator sequence of the ribosomal RNA (rrn) operons. The chain is Transcription antitermination protein NusB from Helicobacter pylori (strain G27).